Consider the following 225-residue polypeptide: PKHD-type hydroxylase KPK_3192 (225 aa).

One can recognise a Fe2OG dioxygenase domain in the interval 78-177 (TISAPLFNRY…RQASFLWIQS (100 aa)). Fe cation contacts are provided by His96, Asp98, and His158. Residue Arg168 participates in 2-oxoglutarate binding.

Fe(2+) serves as cofactor. It depends on L-ascorbate as a cofactor.

The polypeptide is PKHD-type hydroxylase KPK_3192 (Klebsiella pneumoniae (strain 342)).